Reading from the N-terminus, the 417-residue chain is Pigment epithelium-derived factor (417 aa).

Positions 1-19 (MQALVLLLWTGALLGHGSS) are cleaved as a signal peptide. Positions 17-41 (GSSQNVPSSSEGSPVPDSTGEPVEE) are disordered. Over residues 18-28 (SSQNVPSSSEG) the composition is skewed to polar residues. A Pyrrolidone carboxylic acid modification is found at Q20. Phosphoserine is present on S24. N284 carries an N-linked (GlcNAc...) asparagine glycan.

The protein belongs to the serpin family. In terms of assembly, interacts with PNPLA2; this interaction stimulates the phospholipase A2 activity of PNPLA2. As to expression, highly expressed in the liver, gastric glandular mucosa and renal tubules. It is also expressed in the brain, heart, lung retina and testes.

The protein resides in the secreted. It localises to the melanosome. In terms of biological role, neurotrophic protein; induces extensive neuronal differentiation in retinoblastoma cells. Potent inhibitor of angiogenesis. As it does not undergo the S (stressed) to R (relaxed) conformational transition characteristic of active serpins, it exhibits no serine protease inhibitory activity. The sequence is that of Pigment epithelium-derived factor (Serpinf1) from Mus musculus (Mouse).